The chain runs to 36 residues: MAASFLPAILVPIVGLVFPALSMALFFIYASIDDIS.

A helical membrane pass occupies residues 8-28; the sequence is AILVPIVGLVFPALSMALFFI.

The protein belongs to the PsaI family.

The protein localises to the plastid. It is found in the chloroplast thylakoid membrane. May help in the organization of the PsaL subunit. The protein is Photosystem I reaction center subunit VIII of Phaeodactylum tricornutum (strain CCAP 1055/1).